The sequence spans 268 residues: Ribosomal RNA small subunit methyltransferase A (268 aa).

Positions 18, 20, 45, 66, 91, and 112 each coordinate S-adenosyl-L-methionine.

The protein belongs to the class I-like SAM-binding methyltransferase superfamily. rRNA adenine N(6)-methyltransferase family. RsmA subfamily.

Its subcellular location is the cytoplasm. The catalysed reaction is adenosine(1518)/adenosine(1519) in 16S rRNA + 4 S-adenosyl-L-methionine = N(6)-dimethyladenosine(1518)/N(6)-dimethyladenosine(1519) in 16S rRNA + 4 S-adenosyl-L-homocysteine + 4 H(+). In terms of biological role, specifically dimethylates two adjacent adenosines (A1518 and A1519) in the loop of a conserved hairpin near the 3'-end of 16S rRNA in the 30S particle. May play a critical role in biogenesis of 30S subunits. The polypeptide is Ribosomal RNA small subunit methyltransferase A (Shewanella sp. (strain MR-7)).